A 55-amino-acid polypeptide reads, in one-letter code: uncharacterized protein (55 aa).

2 helical membrane-spanning segments follow: residues 5–25 and 26–46; these read LISI…MMHM and LPLY…LYRL.

It is found in the cell membrane. This is an uncharacterized protein from Bacillus subtilis (strain 168).